The chain runs to 347 residues: Oocyte-specific homeobox protein 6 (347 aa).

2 disordered regions span residues 1 to 20 (MLQYNQSPHMPQDPSLHSKF) and 54 to 86 (PRSPMQSSHSVPERDLCPQESQGPSGKSSIQMQ). The span at 72–85 (QESQGPSGKSSIQM) shows a compositional bias: polar residues. The segment at residues 145–204 (HRKIRTVYTEEQKCVLKKHFHKCTYPSREQRMALAVLVGVTANEIQIWFKNHRAKSKRES) is a DNA-binding region (homeobox).

The protein belongs to the paired homeobox family. Obox subfamily. As to expression, specifically expressed in early embryos.

It is found in the nucleus. In terms of biological role, transcription factor required for zygotic genome activation (ZGA), a critical event in early embryonic development during which the developmental control passes from maternally provided mRNAs to the expression of the zygotic genome after fertilization. This chain is Oocyte-specific homeobox protein 6, found in Mus musculus (Mouse).